A 531-amino-acid chain; its full sequence is Methyl-accepting chemotaxis protein McpN (531 aa).

At 1 to 24 (MNESVARVFDRILRGLGLKTLNAQ) the chain is on the cytoplasmic side. A helical transmembrane segment spans residues 25 to 45 (FLLSYALMFGLAACASVALYL). At 46–174 (SMSISPETIN…LMSARADSVQ (129 aa)) the chain is on the periplasmic side. The pilJ-type stretch occupies residues 52-140 (ETINVAGAQR…AMLDQVAQPA (89 aa)). Positions 54–65 (INVAGAQRMLSQ) match the N-box motif. Arginine 61 lines the nitrate pocket. Residues 175-195 (HTQMWIAFGCLLAILVLVVLG) form a helical membrane-spanning segment. At 196 to 531 (RQFGLAPLMR…LRVVLGRFRT (336 aa)) the chain is on the cytoplasmic side. In terms of domain architecture, HAMP spans 201–254 (APLMRQLRGLEVALTEVGAANFTHALAAGHADNEIGRIVAGYERMRQDVSGLLA). The Methyl-accepting transducer domain maps to 259 to 495 (SAAETDKDVA…DIDRNITNVS (237 aa)).

This sequence belongs to the methyl-accepting chemotaxis (MCP) protein family. Ligand free ligand-binding domain (LBD) is present in a monomer-dimer equilibrium. Nitrate binding to the periplasmic LBD stabilizes the homodimer.

Its subcellular location is the cell inner membrane. Its function is as follows. Chemotactic-signal transducers respond to changes in the concentration of attractants and repellents in the environment, transduce a signal from the outside to the inside of the cell, and facilitate sensory adaptation through the variation of the level of methylation. McpN is a chemoreceptor that recognizes specifically nitrate and mediates chemoattraction. Binds nitrate specifically and shows no affinity for other ligands such as nitrite. McpN-mediated taxis occurs only under nitrate starvation conditions. This Pseudomonas aeruginosa (strain ATCC 15692 / DSM 22644 / CIP 104116 / JCM 14847 / LMG 12228 / 1C / PRS 101 / PAO1) protein is Methyl-accepting chemotaxis protein McpN.